The following is a 449-amino-acid chain: Probable glycosyltransferase 5 (449 aa).

Basic and acidic residues predominate over residues 1–14 (MMEKHGGKVTSDRR). Residues 1-24 (MMEKHGGKVTSDRRAGRRQHGQRC) form a disordered region. Over 1–28 (MMEKHGGKVTSDRRAGRRQHGQRCSASD) the chain is Cytoplasmic. Residues 29 to 49 (AAPLVVVVILIVAALFLILGP) form a helical; Signal-anchor for type II membrane protein membrane-spanning segment. Residues 50-449 (TGSSSFTVPR…HPTFRAARPT (400 aa)) are Lumenal-facing. Positions 74–109 (APPPPPPPAQMQAGANASSEEDSGLPPPRQLTDPPY) are disordered. Asparagine 89, asparagine 413, and asparagine 422 each carry an N-linked (GlcNAc...) asparagine glycan.

It belongs to the glycosyltransferase 34 family.

The protein localises to the golgi apparatus membrane. In terms of biological role, probable glycosyltransferase that may be involved in the biosynthesis of xyloglucan. In Oryza sativa subsp. japonica (Rice), this protein is Probable glycosyltransferase 5.